The sequence spans 630 residues: Angiotensin-converting enzyme-related protein (630 aa).

Residues 1-22 form the signal peptide; it reads MGACNITVLLLVIMLWLPHGLS. Residues 28-615 enclose the Peptidase M2 domain; it reads SASVLEARRF…SRLGVPLGWG (588 aa). 2 disulfides stabilise this stretch: Cys142–Cys150 and Cys344–Cys362. His375 is a binding site for Zn(2+). The Proton acceptor role is filled by Glu376. Zn(2+) contacts are provided by His379 and Glu403. His505 (proton donor) is an active-site residue. An intrachain disulfide couples Cys530 to Cys548.

Belongs to the peptidase M2 family. Zn(2+) is required as a cofactor. In terms of processing, glycosylated.

It is found in the secreted. Its subcellular location is the extracellular space. It carries out the reaction Release of a C-terminal dipeptide, oligopeptide-|-Xaa-Yaa, when Xaa is not Pro, and Yaa is neither Asp nor Glu. Thus, conversion of angiotensin I to angiotensin II, with increase in vasoconstrictor activity, but no action on angiotensin II.. Inhibited by captopril, lisinopril, trandolaprilat, fosinoprilat and enalaprilat. Functionally, may be involved in the specific maturation or degradation of a number of bioactive peptides. May have a role in the specification of heart progenitors. The chain is Angiotensin-converting enzyme-related protein (Acer) from Drosophila melanogaster (Fruit fly).